Consider the following 656-residue polypeptide: Pentatricopeptide repeat-containing protein At1g62260, mitochondrial (656 aa).

PPR repeat units follow at residues 70–104 (NTVT…DVVT), 105–134 (WNTM…MPSR), 135–169 (DSFS…NAVS), 170–200 (WSAM…DSSP), 203–227 (ALVA…YGSL), 234–264 (LVYA…IPDL), 280–310 (NVVS…MKDR), 311–345 (DTIS…DAHS), 346–372 (WNMM…TPEK), 373–407 (HTVS…GEKP), 408–438 (DPHT…VVKT), 442–472 (DVPV…MKLK), 474–508 (EVIT…GIYP), 509–544 (SHIT…KIEP), and 545–575 (QMEH…MPFE). The type E motif stretch occupies residues 580-655 (VWGALLDACR…ERGSSWVDSS (76 aa)).

This sequence belongs to the PPR family. PCMP-E subfamily.

It is found in the mitochondrion. The polypeptide is Pentatricopeptide repeat-containing protein At1g62260, mitochondrial (PCMP-E10) (Arabidopsis thaliana (Mouse-ear cress)).